The following is a 224-amino-acid chain: NADH-quinone oxidoreductase subunit B (224 aa).

[4Fe-4S] cluster-binding residues include Cys-67, Cys-68, Cys-133, and Cys-162. Positions 200–224 (DMPAEKDRKRGERIKVTNLRTPDEI) are disordered. Basic and acidic residues predominate over residues 201-224 (MPAEKDRKRGERIKVTNLRTPDEI).

The protein belongs to the complex I 20 kDa subunit family. NDH-1 is composed of 14 different subunits. Subunits NuoB, C, D, E, F, and G constitute the peripheral sector of the complex. Requires [4Fe-4S] cluster as cofactor.

The protein localises to the cell inner membrane. It catalyses the reaction a quinone + NADH + 5 H(+)(in) = a quinol + NAD(+) + 4 H(+)(out). Functionally, NDH-1 shuttles electrons from NADH, via FMN and iron-sulfur (Fe-S) centers, to quinones in the respiratory chain. The immediate electron acceptor for the enzyme in this species is believed to be ubiquinone. Couples the redox reaction to proton translocation (for every two electrons transferred, four hydrogen ions are translocated across the cytoplasmic membrane), and thus conserves the redox energy in a proton gradient. In Aeromonas salmonicida (strain A449), this protein is NADH-quinone oxidoreductase subunit B.